Reading from the N-terminus, the 363-residue chain is Serpentine receptor class T-55 (363 aa).

The first 18 residues, 1 to 18, serve as a signal peptide directing secretion; that stretch reads MKLRHFLIFLMLIPISSS. 7 consecutive transmembrane segments (helical) span residues 70 to 90, 107 to 127, 143 to 163, 187 to 207, 231 to 251, 278 to 298, and 303 to 323; these read IYYISSGLFFQLIGWPVIWVF, VFIGLIEITEIWGNSVFPGFV, IVGKMTMVQWVLGSSSAAFLG, WLTVLFFYACYGSIFFDTVLF, FLYFHNIIVATTLILVYACLC, ICISLTYAIPAISFVTMFVLP, and FFHVSDITYQLSGGLPFIMYI.

It belongs to the nematode receptor-like protein srt family.

The protein localises to the membrane. The chain is Serpentine receptor class T-55 (srt-55) from Caenorhabditis elegans.